We begin with the raw amino-acid sequence, 510 residues long: Glycogen synthase (510 aa).

Lys-18 contributes to the ADP-alpha-D-glucose binding site.

The protein belongs to the glycosyltransferase 1 family. Bacterial/plant glycogen synthase subfamily.

The catalysed reaction is [(1-&gt;4)-alpha-D-glucosyl](n) + ADP-alpha-D-glucose = [(1-&gt;4)-alpha-D-glucosyl](n+1) + ADP + H(+). The protein operates within glycan biosynthesis; glycogen biosynthesis. Its function is as follows. Synthesizes alpha-1,4-glucan chains using ADP-glucose. The sequence is that of Glycogen synthase from Bordetella parapertussis (strain 12822 / ATCC BAA-587 / NCTC 13253).